The primary structure comprises 158 residues: Biotin carboxyl carrier protein of acetyl-CoA carboxylase (158 aa).

Residues 81–157 (YATIVSPMVG…DCGQALMKVE (77 aa)) form the Biotinyl-binding domain. Lys-123 carries the post-translational modification N6-biotinyllysine.

The protein resides in the plastid. The protein localises to the chloroplast. Its pathway is lipid metabolism; fatty acid biosynthesis. This protein is a component of the acetyl coenzyme A carboxylase complex; first, biotin carboxylase catalyzes the carboxylation of the carrier protein and then the transcarboxylase transfers the carboxyl group to form malonyl-CoA. This chain is Biotin carboxyl carrier protein of acetyl-CoA carboxylase (accB), found in Pyropia yezoensis (Susabi-nori).